The sequence spans 667 residues: DNA ligase (667 aa).

NAD(+) is bound by residues 32 to 36 (DSEYD), 81 to 82 (SL), and glutamate 110. Lysine 112 serves as the catalytic N6-AMP-lysine intermediate. The NAD(+) site is built by arginine 133, glutamate 167, lysine 283, and lysine 307. Positions 401, 404, 419, and 424 each coordinate Zn(2+). Residues 586 to 667 (EGHPDFKDKT…FVQKQNEIEG (82 aa)) form the BRCT domain.

The protein belongs to the NAD-dependent DNA ligase family. LigA subfamily. Mg(2+) is required as a cofactor. Mn(2+) serves as cofactor.

The catalysed reaction is NAD(+) + (deoxyribonucleotide)n-3'-hydroxyl + 5'-phospho-(deoxyribonucleotide)m = (deoxyribonucleotide)n+m + AMP + beta-nicotinamide D-nucleotide.. In terms of biological role, DNA ligase that catalyzes the formation of phosphodiester linkages between 5'-phosphoryl and 3'-hydroxyl groups in double-stranded DNA using NAD as a coenzyme and as the energy source for the reaction. It is essential for DNA replication and repair of damaged DNA. The sequence is that of DNA ligase from Staphylococcus saprophyticus subsp. saprophyticus (strain ATCC 15305 / DSM 20229 / NCIMB 8711 / NCTC 7292 / S-41).